Consider the following 629-residue polypeptide: Chaperone protein HtpG (629 aa).

The a; substrate-binding stretch occupies residues 1-343; the sequence is MQKQTLSFQA…SSDLPLNVSR (343 aa). The b stretch occupies residues 344–558; that stretch reads ELLQESRAVK…DGDMSTQLAR (215 aa). The segment at 559-629 is c; sequence MLKQAGQTVP…YVRRVNALLV (71 aa).

This sequence belongs to the heat shock protein 90 family. In terms of assembly, homodimer.

Its subcellular location is the cytoplasm. Molecular chaperone. Has ATPase activity. The protein is Chaperone protein HtpG of Polaromonas naphthalenivorans (strain CJ2).